Here is a 279-residue protein sequence, read N- to C-terminus: Thioredoxin-like 1-1, chloroplastic (279 aa).

The Thioredoxin domain maps to 56 to 202 (ALTERKARPL…FKDALAKHGP (147 aa)). Residues C125 and C128 each act as nucleophile in the active site. Residues C125 and C128 are joined by a disulfide bond.

The protein belongs to the thioredoxin family.

Its function is as follows. Probable thiol-disulfide oxidoreductase that may participate in various redox reactions. This Oryza sativa subsp. japonica (Rice) protein is Thioredoxin-like 1-1, chloroplastic.